A 303-amino-acid chain; its full sequence is UDP-3-O-acyl-N-acetylglucosamine deacetylase (303 aa).

The Zn(2+) site is built by His78, His237, and Asp241. His264 serves as the catalytic Proton donor.

It belongs to the LpxC family. The cofactor is Zn(2+).

It catalyses the reaction a UDP-3-O-[(3R)-3-hydroxyacyl]-N-acetyl-alpha-D-glucosamine + H2O = a UDP-3-O-[(3R)-3-hydroxyacyl]-alpha-D-glucosamine + acetate. It functions in the pathway glycolipid biosynthesis; lipid IV(A) biosynthesis; lipid IV(A) from (3R)-3-hydroxytetradecanoyl-[acyl-carrier-protein] and UDP-N-acetyl-alpha-D-glucosamine: step 2/6. Catalyzes the hydrolysis of UDP-3-O-myristoyl-N-acetylglucosamine to form UDP-3-O-myristoylglucosamine and acetate, the committed step in lipid A biosynthesis. This Xanthomonas campestris pv. campestris (strain 8004) protein is UDP-3-O-acyl-N-acetylglucosamine deacetylase.